The chain runs to 459 residues: Glutamate--isopropylamine ligase (459 aa).

The GS beta-grasp domain maps to 19–115 (HNIDTIRLGA…VLCDIQHLNG (97 aa)). Positions 122–459 (PRNLLRKAIE…WELARYLDII (338 aa)) constitute a GS catalytic domain.

This sequence belongs to the glutamine synthetase family.

The catalysed reaction is isopropylamine + L-glutamate + ATP = gamma-L-glutamyl-isopropylamide + ADP + phosphate + H(+). Its function is as follows. Involved in the degradation of isopropylamine, which is a constituent of the herbicides atrazine. Catalyzes the ATP-dependent formation of gamma-glutamyl-isopropylamide from isopropylamine and L-glutamate. It can also use aminoalkanes, amino-alcohols (L-alaninol and D-alaninol) and amino-esters as substrates. This chain is Glutamate--isopropylamine ligase (ipuC), found in Pseudomonas sp.